Here is a 223-residue protein sequence, read N- to C-terminus: Cytidylate kinase (223 aa).

12–20 (GPAGSGKST) lines the ATP pocket.

This sequence belongs to the cytidylate kinase family. Type 1 subfamily.

The protein resides in the cytoplasm. It catalyses the reaction CMP + ATP = CDP + ADP. The catalysed reaction is dCMP + ATP = dCDP + ADP. This chain is Cytidylate kinase, found in Onion yellows phytoplasma (strain OY-M).